A 434-amino-acid chain; its full sequence is Alpha-enolase (434 aa).

Residue S40 coordinates Mg(2+). Residues H158 and E167 each contribute to the substrate site. Catalysis depends on E210, which acts as the Proton donor. D245, E293, and D318 together coordinate Mg(2+). Residues E293, D318, 370 to 373 (SHRS), and K394 each bind substrate.

Belongs to the enolase family. Homodimer. Mg(2+) serves as cofactor.

The protein resides in the cytoplasm. The enzyme catalyses (2R)-2-phosphoglycerate = phosphoenolpyruvate + H2O. Its pathway is carbohydrate degradation; glycolysis; pyruvate from D-glyceraldehyde 3-phosphate: step 4/5. The protein is Alpha-enolase of Trachemys scripta elegans (Red-eared slider turtle).